Here is a 152-residue protein sequence, read N- to C-terminus: Small ribosomal subunit protein uS11 (152 aa).

Residues 133-152 (VTPIPTDSTRRKSGHRGRRL) form a disordered region. Basic residues predominate over residues 143-152 (RKSGHRGRRL).

It belongs to the universal ribosomal protein uS11 family. In terms of assembly, component of the small ribosomal subunit. Part of the small subunit (SSU) processome, composed of more than 70 proteins and the RNA chaperone small nucleolar RNA (snoRNA) U3.

It localises to the cytoplasm. Its subcellular location is the nucleus. The protein resides in the nucleolus. Functionally, component of the small ribosomal subunit. The ribosome is a large ribonucleoprotein complex responsible for the synthesis of proteins in the cell. Part of the small subunit (SSU) processome, first precursor of the small eukaryotic ribosomal subunit. During the assembly of the SSU processome in the nucleolus, many ribosome biogenesis factors, an RNA chaperone and ribosomal proteins associate with the nascent pre-rRNA and work in concert to generate RNA folding, modifications, rearrangements and cleavage as well as targeted degradation of pre-ribosomal RNA by the RNA exosome. In Dictyostelium discoideum (Social amoeba), this protein is Small ribosomal subunit protein uS11 (rps14).